We begin with the raw amino-acid sequence, 91 residues long: Small ribosomal subunit protein uS15 (91 aa).

The protein belongs to the universal ribosomal protein uS15 family. In terms of assembly, part of the 30S ribosomal subunit. Forms a bridge to the 50S subunit in the 70S ribosome, contacting the 23S rRNA.

One of the primary rRNA binding proteins, it binds directly to 16S rRNA where it helps nucleate assembly of the platform of the 30S subunit by binding and bridging several RNA helices of the 16S rRNA. Its function is as follows. Forms an intersubunit bridge (bridge B4) with the 23S rRNA of the 50S subunit in the ribosome. The chain is Small ribosomal subunit protein uS15 from Rickettsia felis (strain ATCC VR-1525 / URRWXCal2) (Rickettsia azadi).